Reading from the N-terminus, the 290-residue chain is 4-hydroxy-3-methylbut-2-enyl diphosphate reductase (290 aa).

A [4Fe-4S] cluster-binding site is contributed by Cys-13. Residues His-41 and His-75 each coordinate (2E)-4-hydroxy-3-methylbut-2-enyl diphosphate. Residues His-41 and His-75 each coordinate dimethylallyl diphosphate. Positions 41 and 75 each coordinate isopentenyl diphosphate. Cys-97 is a binding site for [4Fe-4S] cluster. His-129 contacts (2E)-4-hydroxy-3-methylbut-2-enyl diphosphate. Residue His-129 coordinates dimethylallyl diphosphate. His-129 provides a ligand contact to isopentenyl diphosphate. Glu-131 serves as the catalytic Proton donor. Residue Thr-167 participates in (2E)-4-hydroxy-3-methylbut-2-enyl diphosphate binding. Position 198 (Cys-198) interacts with [4Fe-4S] cluster. Ser-226, Ser-227, Asn-228, and Ser-270 together coordinate (2E)-4-hydroxy-3-methylbut-2-enyl diphosphate. Ser-226, Ser-227, Asn-228, and Ser-270 together coordinate dimethylallyl diphosphate. Residues Ser-226, Ser-227, Asn-228, and Ser-270 each contribute to the isopentenyl diphosphate site.

Belongs to the IspH family. It depends on [4Fe-4S] cluster as a cofactor.

The catalysed reaction is isopentenyl diphosphate + 2 oxidized [2Fe-2S]-[ferredoxin] + H2O = (2E)-4-hydroxy-3-methylbut-2-enyl diphosphate + 2 reduced [2Fe-2S]-[ferredoxin] + 2 H(+). The enzyme catalyses dimethylallyl diphosphate + 2 oxidized [2Fe-2S]-[ferredoxin] + H2O = (2E)-4-hydroxy-3-methylbut-2-enyl diphosphate + 2 reduced [2Fe-2S]-[ferredoxin] + 2 H(+). The protein operates within isoprenoid biosynthesis; dimethylallyl diphosphate biosynthesis; dimethylallyl diphosphate from (2E)-4-hydroxy-3-methylbutenyl diphosphate: step 1/1. It participates in isoprenoid biosynthesis; isopentenyl diphosphate biosynthesis via DXP pathway; isopentenyl diphosphate from 1-deoxy-D-xylulose 5-phosphate: step 6/6. Catalyzes the conversion of 1-hydroxy-2-methyl-2-(E)-butenyl 4-diphosphate (HMBPP) into a mixture of isopentenyl diphosphate (IPP) and dimethylallyl diphosphate (DMAPP). Acts in the terminal step of the DOXP/MEP pathway for isoprenoid precursor biosynthesis. The chain is 4-hydroxy-3-methylbut-2-enyl diphosphate reductase from Bacteroides fragilis (strain ATCC 25285 / DSM 2151 / CCUG 4856 / JCM 11019 / LMG 10263 / NCTC 9343 / Onslow / VPI 2553 / EN-2).